The chain runs to 137 residues: Small ribosomal subunit protein uS12 (137 aa).

The tract at residues 1–20 is disordered; it reads MPTTNQLVNRGRTSKVQKQN. The residue at position 102 (Asp-102) is a 3-methylthioaspartic acid.

This sequence belongs to the universal ribosomal protein uS12 family. As to quaternary structure, part of the 30S ribosomal subunit. Contacts proteins S8 and S17. May interact with IF1 in the 30S initiation complex.

Its function is as follows. With S4 and S5 plays an important role in translational accuracy. Interacts with and stabilizes bases of the 16S rRNA that are involved in tRNA selection in the A site and with the mRNA backbone. Located at the interface of the 30S and 50S subunits, it traverses the body of the 30S subunit contacting proteins on the other side and probably holding the rRNA structure together. The combined cluster of proteins S8, S12 and S17 appears to hold together the shoulder and platform of the 30S subunit. This Mycoplasmopsis synoviae (strain 53) (Mycoplasma synoviae) protein is Small ribosomal subunit protein uS12.